The chain runs to 260 residues: MNPYSVKLDTFEGPLDLLLHLINQAEVDIYDIPVALITEQYMAYIHTMQELQLDVASEYLVMAATLLQIKSKMLLPKQEEIFDETFEYEEEDPREELMFRLIEYRRYKEAAQELKEKEGERSQVHTRLPDNLDDYLTEEERQRQSIQGVTLFDMLAAYQKLLKRRAYSRPRTSTVKVEEYSIDERMTDILMDLEKCNGKCRFQDLFVEKGRGHMVVTFLAMLELMKTDAIYCEQNENFADIWIYRREGKNRDIERASSSH.

This sequence belongs to the ScpA family. Component of a cohesin-like complex composed of ScpA, ScpB and the Smc homodimer, in which ScpA and ScpB bind to the head domain of Smc. The presence of the three proteins is required for the association of the complex with DNA.

The protein localises to the cytoplasm. In terms of biological role, participates in chromosomal partition during cell division. May act via the formation of a condensin-like complex containing Smc and ScpB that pull DNA away from mid-cell into both cell halves. This chain is Segregation and condensation protein A, found in Halalkalibacterium halodurans (strain ATCC BAA-125 / DSM 18197 / FERM 7344 / JCM 9153 / C-125) (Bacillus halodurans).